The primary structure comprises 130 residues: Arsenical-resistance protein 2 (130 aa).

Residues 17–124 (QRKDFQVVDL…WETHCRESNL (108 aa)) form the Rhodanese domain.

Its function is as follows. Involved in resistance to arsenic compounds. In Saccharomyces cerevisiae (strain ATCC 204508 / S288c) (Baker's yeast), this protein is Arsenical-resistance protein 2 (ARR2).